The following is a 315-amino-acid chain: 4-hydroxy-3-methylbut-2-enyl diphosphate reductase (315 aa).

Cys12 provides a ligand contact to [4Fe-4S] cluster. His41 and His74 together coordinate (2E)-4-hydroxy-3-methylbut-2-enyl diphosphate. His41 and His74 together coordinate dimethylallyl diphosphate. His41 and His74 together coordinate isopentenyl diphosphate. Cys96 contacts [4Fe-4S] cluster. His124 lines the (2E)-4-hydroxy-3-methylbut-2-enyl diphosphate pocket. Position 124 (His124) interacts with dimethylallyl diphosphate. Residue His124 coordinates isopentenyl diphosphate. Glu126 functions as the Proton donor in the catalytic mechanism. Residue Thr168 participates in (2E)-4-hydroxy-3-methylbut-2-enyl diphosphate binding. Cys198 provides a ligand contact to [4Fe-4S] cluster. Positions 226, 227, 228, and 270 each coordinate (2E)-4-hydroxy-3-methylbut-2-enyl diphosphate. Ser226, Ser227, Asn228, and Ser270 together coordinate dimethylallyl diphosphate. Residues Ser226, Ser227, Asn228, and Ser270 each contribute to the isopentenyl diphosphate site.

It belongs to the IspH family. [4Fe-4S] cluster serves as cofactor.

The enzyme catalyses isopentenyl diphosphate + 2 oxidized [2Fe-2S]-[ferredoxin] + H2O = (2E)-4-hydroxy-3-methylbut-2-enyl diphosphate + 2 reduced [2Fe-2S]-[ferredoxin] + 2 H(+). It carries out the reaction dimethylallyl diphosphate + 2 oxidized [2Fe-2S]-[ferredoxin] + H2O = (2E)-4-hydroxy-3-methylbut-2-enyl diphosphate + 2 reduced [2Fe-2S]-[ferredoxin] + 2 H(+). It functions in the pathway isoprenoid biosynthesis; dimethylallyl diphosphate biosynthesis; dimethylallyl diphosphate from (2E)-4-hydroxy-3-methylbutenyl diphosphate: step 1/1. It participates in isoprenoid biosynthesis; isopentenyl diphosphate biosynthesis via DXP pathway; isopentenyl diphosphate from 1-deoxy-D-xylulose 5-phosphate: step 6/6. Functionally, catalyzes the conversion of 1-hydroxy-2-methyl-2-(E)-butenyl 4-diphosphate (HMBPP) into a mixture of isopentenyl diphosphate (IPP) and dimethylallyl diphosphate (DMAPP). Acts in the terminal step of the DOXP/MEP pathway for isoprenoid precursor biosynthesis. In Pseudomonas syringae pv. syringae (strain B728a), this protein is 4-hydroxy-3-methylbut-2-enyl diphosphate reductase.